The following is a 96-amino-acid chain: uncharacterized protein (96 aa).

Asparagine 4 is a glycosylation site (N-linked (GlcNAc...) asparagine). Residues 59-81 (VFFTIFDTIITIIVRSGIPFPLL) traverse the membrane as a helical segment.

The protein localises to the membrane. This is an uncharacterized protein from Saccharomyces cerevisiae (strain ATCC 204508 / S288c) (Baker's yeast).